Reading from the N-terminus, the 613-residue chain is Pheromone-processing carboxypeptidase kex1 (613 aa).

An N-terminal signal peptide occupies residues 1–19 (MTMSFCALLFFLIISPTLA). The Lumenal segment spans residues 20–506 (ATKSAADYYV…KETEWKAYAK (487 aa)). N-linked (GlcNAc...) asparagine glycosylation is found at N102 and N109. Catalysis depends on residues S173 and D373. Residues N424 and N432 are each glycosylated (N-linked (GlcNAc...) asparagine). The active site involves H435. The disordered stretch occupies residues 463–490 (QPADSRIDGEKLPQTSVGGHPNSTAAEQ). The span at 475–489 (PQTSVGGHPNSTAAE) shows a compositional bias: polar residues. Residue N484 is glycosylated (N-linked (GlcNAc...) asparagine). The chain crosses the membrane as a helical span at residues 507 to 527 (SGEAALIVVIIGVTVWGFFIW). Residues 528–613 (RSRRRNRGYE…ASSREDGTHP (86 aa)) are Cytoplasmic-facing. A disordered region spans residues 559 to 613 (GAGDVEAGDFDESELDTLHSPGLERENYAVGDDSDEDDPNHPRPTASSREDGTHP). A compositionally biased stretch (acidic residues) spans 564–573 (EAGDFDESEL).

This sequence belongs to the peptidase S10 family.

Its subcellular location is the golgi apparatus. It is found in the trans-Golgi network membrane. The enzyme catalyses Preferential release of a C-terminal arginine or lysine residue.. Protease with a carboxypeptidase B-like function involved in the C-terminal processing of the lysine and arginine residues from protein precursors. Promotes cell fusion and is involved in the programmed cell death. In Aspergillus clavatus (strain ATCC 1007 / CBS 513.65 / DSM 816 / NCTC 3887 / NRRL 1 / QM 1276 / 107), this protein is Pheromone-processing carboxypeptidase kex1 (kex1).